Consider the following 240-residue polypeptide: Enoyl-CoA delta isomerase 2, peroxisomal (240 aa).

A Microbody targeting signal motif is present at residues 238–240; the sequence is PKL.

It belongs to the enoyl-CoA hydratase/isomerase family.

The protein resides in the peroxisome. The catalysed reaction is a (3Z)-enoyl-CoA = a 4-saturated (2E)-enoyl-CoA. It carries out the reaction a (3E)-enoyl-CoA = a 4-saturated (2E)-enoyl-CoA. It functions in the pathway lipid metabolism; fatty acid beta-oxidation. Its function is as follows. Able to isomerize both 3-cis and 3-trans double bonds into the 2-trans form in a range of enoyl-CoA species. Essential for the beta oxidation of unsaturated fatty acids. Involved with IBR1 and IBR3 in the peroxisomal beta-oxidation of indole-3-butyric acid (IBA) to form indole-3-acetic acid (IAA), a biologically active auxin. The chain is Enoyl-CoA delta isomerase 2, peroxisomal from Arabidopsis thaliana (Mouse-ear cress).